A 196-amino-acid polypeptide reads, in one-letter code: Orotate phosphoribosyltransferase (196 aa).

117 to 125 (EDIVTTGLS) is a 5-phospho-alpha-D-ribose 1-diphosphate binding site. Orotate-binding residues include Thr121 and Arg149.

This sequence belongs to the purine/pyrimidine phosphoribosyltransferase family. PyrE subfamily. In terms of assembly, homodimer. The cofactor is Mg(2+).

It catalyses the reaction orotidine 5'-phosphate + diphosphate = orotate + 5-phospho-alpha-D-ribose 1-diphosphate. The protein operates within pyrimidine metabolism; UMP biosynthesis via de novo pathway; UMP from orotate: step 1/2. Functionally, catalyzes the transfer of a ribosyl phosphate group from 5-phosphoribose 1-diphosphate to orotate, leading to the formation of orotidine monophosphate (OMP). The polypeptide is Orotate phosphoribosyltransferase (Methylorubrum extorquens (strain PA1) (Methylobacterium extorquens)).